The following is a 185-amino-acid chain: Transcriptional repressor NrdR (185 aa).

The interval 1–24 is disordered; sequence MRCPFCGGPDTQVKDSRPSEDSSA. The segment at 3 to 34 is a zinc-finger region; that stretch reads CPFCGGPDTQVKDSRPSEDSSAIRRRRVCPDC. A compositionally biased stretch (basic and acidic residues) spans 12 to 24; that stretch reads QVKDSRPSEDSSA. Residues 49 to 139 enclose the ATP-cone domain; sequence LVVLKRSGKR…VYKNFREAQD (91 aa). The disordered stretch occupies residues 148 to 185; the sequence is GERLDGEGDLPEQGDAVPAPPDEAVAAPRRGRPARKRA. Residues 176–185 are compositionally biased toward basic residues; the sequence is RRGRPARKRA.

It belongs to the NrdR family. It depends on Zn(2+) as a cofactor.

Its function is as follows. Negatively regulates transcription of bacterial ribonucleotide reductase nrd genes and operons by binding to NrdR-boxes. This chain is Transcriptional repressor NrdR, found in Methylorubrum extorquens (strain CM4 / NCIMB 13688) (Methylobacterium extorquens).